The chain runs to 515 residues: tRNA pseudouridine synthase Pus10 (515 aa).

Residues Cys21 and Cys24 each contribute to the Zn(2+) site. The stretch at 42–85 (KEVTYELQKYLSHGDPAEENDTPPSKKAKIEEDTSSNEHLGNCE) forms a coiled coil. Residues 55–82 (GDPAEENDTPPSKKAKIEEDTSSNEHLG) form a disordered region. 2 residues coordinate Zn(2+): Cys96 and Cys99. The interval 291–304 (TPWIIDGERKIESS) is RNA binding forefinger loop. Asp331 serves as the catalytic Nucleophile. The tract at residues 428–443 (QKTPLRVLHRRPLASR) is RNA binding thumb loop.

The protein belongs to the pseudouridine synthase Pus10 family.

Its subcellular location is the nucleus. The protein resides in the cytoplasm. It localises to the mitochondrion. It carries out the reaction uridine(55) in tRNA = pseudouridine(55) in tRNA. The catalysed reaction is uridine(54) in tRNA = pseudouridine(54) in tRNA. Its function is as follows. Protein with different functions depending on its subcellular location: involved in miRNA processing in the nucleus and acts as a tRNA pseudouridylate synthase in the cytoplasm. In the cytoplasm, acts as a pseudouridylate synthase by catalyzing synthesis of pseudouridine(54) and pseudouridine(55) from uracil-54 and uracil-55, respectively, in the psi GC loop of a subset of tRNAs. tRNA pseudouridylate synthase activity is enhanced by the presence of 1-methyladenosine at position 53-61 of tRNAs. Does not show tRNA pseudouridylate synthase activity in the nucleus. In the nucleus, promotes primary microRNAs (pri-miRNAs) processing independently of its RNA pseudouridylate synthase activity. Binds pri-miRNAs. In Xenopus laevis (African clawed frog), this protein is tRNA pseudouridine synthase Pus10.